The primary structure comprises 883 residues: Histidine--tRNA ligase, cytoplasmic (883 aa).

This sequence belongs to the class-II aminoacyl-tRNA synthetase family.

The protein localises to the cytoplasm. It is found in the cytosol. The catalysed reaction is tRNA(His) + L-histidine + ATP = L-histidyl-tRNA(His) + AMP + diphosphate + H(+). The protein is Histidine--tRNA ligase, cytoplasmic of Arabidopsis thaliana (Mouse-ear cress).